The chain runs to 274 residues: MRKSMISFLEKKAKNEKITMVSAYDYHSARILDNSDIDIILVGDSLAMTVLGMQDTLSVTMDEMLIFTKAVSRGAKKSFVLADMPFMSYQSSDRDAILNASRFIKESHANGVKVEGGIEIASKIKLISQSGIPVVAHLGLTPQAVNMLGGYRVQGKDLQSAQKIIDDAKAVQDAGACMLVLECVPVKLAQKISSILEIPTIGIGSGKYCDGQVLVYHDLLGLNKDFKAKFVKHFDKIDPQVGVEKYRDEVKSGIFPSQEHSFDYLDDELLDKLY.

The Mg(2+) site is built by D44 and D83. 3-methyl-2-oxobutanoate-binding positions include 44–45, D83, and K113; that span reads DS. E115 provides a ligand contact to Mg(2+). E182 (proton acceptor) is an active-site residue.

This sequence belongs to the PanB family. As to quaternary structure, homodecamer; pentamer of dimers. Mg(2+) serves as cofactor.

It localises to the cytoplasm. It catalyses the reaction 3-methyl-2-oxobutanoate + (6R)-5,10-methylene-5,6,7,8-tetrahydrofolate + H2O = 2-dehydropantoate + (6S)-5,6,7,8-tetrahydrofolate. It functions in the pathway cofactor biosynthesis; (R)-pantothenate biosynthesis; (R)-pantoate from 3-methyl-2-oxobutanoate: step 1/2. In terms of biological role, catalyzes the reversible reaction in which hydroxymethyl group from 5,10-methylenetetrahydrofolate is transferred onto alpha-ketoisovalerate to form ketopantoate. This is 3-methyl-2-oxobutanoate hydroxymethyltransferase from Campylobacter jejuni subsp. jejuni serotype O:6 (strain 81116 / NCTC 11828).